A 263-amino-acid polypeptide reads, in one-letter code: Type III pantothenate kinase (263 aa).

Position 14–21 (14–21 (DIGNTSVN)) interacts with ATP. Residue 115–118 (GADR) coordinates substrate. The Proton acceptor role is filled by Asp-117. Residue Asp-137 coordinates K(+). Position 140 (Thr-140) interacts with ATP. Residue Thr-192 participates in substrate binding.

Belongs to the type III pantothenate kinase family. In terms of assembly, homodimer. It depends on NH4(+) as a cofactor. K(+) serves as cofactor.

It localises to the cytoplasm. It carries out the reaction (R)-pantothenate + ATP = (R)-4'-phosphopantothenate + ADP + H(+). It functions in the pathway cofactor biosynthesis; coenzyme A biosynthesis; CoA from (R)-pantothenate: step 1/5. Functionally, catalyzes the phosphorylation of pantothenate (Pan), the first step in CoA biosynthesis. This Dehalococcoides mccartyi (strain CBDB1) protein is Type III pantothenate kinase.